Reading from the N-terminus, the 295-residue chain is UDP-N-acetylenolpyruvoylglucosamine reductase (295 aa).

An FAD-binding PCMH-type domain is found at 23-188 (KVGGPADFLA…ISAKFALKPG (166 aa)). Arginine 167 is an active-site residue. Catalysis depends on serine 217, which acts as the Proton donor. Glutamate 287 is a catalytic residue.

It belongs to the MurB family. FAD is required as a cofactor.

The protein resides in the cytoplasm. It catalyses the reaction UDP-N-acetyl-alpha-D-muramate + NADP(+) = UDP-N-acetyl-3-O-(1-carboxyvinyl)-alpha-D-glucosamine + NADPH + H(+). It participates in cell wall biogenesis; peptidoglycan biosynthesis. In terms of biological role, cell wall formation. In Streptococcus pyogenes serotype M49 (strain NZ131), this protein is UDP-N-acetylenolpyruvoylglucosamine reductase.